Here is a 100-residue protein sequence, read N- to C-terminus: Small ribosomal subunit protein bS18c (100 aa).

The protein belongs to the bacterial ribosomal protein bS18 family. As to quaternary structure, part of the 30S ribosomal subunit.

It localises to the plastid. The protein localises to the chloroplast. This Pleurastrum terricola (Filamentous green alga) protein is Small ribosomal subunit protein bS18c.